Consider the following 393-residue polypeptide: MILVINSGSSSIKFKLFDTSKAIEPILDGLAERIGIDGFLKFEHNNQKYKFEDPLPDHEHAIQLILNKLLELKIISNIDEIKGVGFRVVHGGEISHSSIINEEVLQKIQESVKLAPLHNPAAIIAIKAVKKLMPNTSMIACFDTAFHQTMPQVNYLYSVPYKWYEEFGVRKYGFHGISYEYIVNKCEEILNKKKEHLNLIVCHLGNGASISCIKDGKSYDTSMGLTPLAGLMMGTRSGDIDVSICEYVAKQTNSDIFAITQILNKQSGLLGLSQTSADMRDVLEQYDRNDKKAIIAVEKYVQVVADFIVKYANYLDSIDAVVFTAGIGENADVIRDLICKRVKLLGLQIDQEKNESKYSDYKLISSEKSKIPVYAIRTNEEKMICLDTLNLIK.

Residue Asn-6 coordinates Mg(2+). Lys-13 provides a ligand contact to ATP. Arg-87 contacts substrate. Asp-143 (proton donor/acceptor) is an active-site residue. ATP contacts are provided by residues 203–207 (HLGNG), 278–280 (DMR), and 326–330 (GIGEN). Glu-380 is a binding site for Mg(2+).

Belongs to the acetokinase family. Homodimer. Requires Mg(2+) as cofactor. It depends on Mn(2+) as a cofactor.

It localises to the cytoplasm. It carries out the reaction acetate + ATP = acetyl phosphate + ADP. Its pathway is metabolic intermediate biosynthesis; acetyl-CoA biosynthesis; acetyl-CoA from acetate: step 1/2. Its function is as follows. Catalyzes the formation of acetyl phosphate from acetate and ATP. Can also catalyze the reverse reaction. This is Acetate kinase from Mycoplasma capricolum subsp. capricolum (strain California kid / ATCC 27343 / NCTC 10154).